A 232-amino-acid chain; its full sequence is Cytidylate kinase (232 aa).

Position 19–27 (19–27 (GPAGVGKTT)) interacts with ATP.

It belongs to the cytidylate kinase family. Type 1 subfamily.

It is found in the cytoplasm. The enzyme catalyses CMP + ATP = CDP + ADP. The catalysed reaction is dCMP + ATP = dCDP + ADP. This chain is Cytidylate kinase, found in Nitratidesulfovibrio vulgaris (strain DP4) (Desulfovibrio vulgaris).